The sequence spans 99 residues: Large ribosomal subunit protein uL23 (99 aa).

This sequence belongs to the universal ribosomal protein uL23 family. As to quaternary structure, part of the 50S ribosomal subunit. Contacts protein L29, and trigger factor when it is bound to the ribosome.

Functionally, one of the early assembly proteins it binds 23S rRNA. One of the proteins that surrounds the polypeptide exit tunnel on the outside of the ribosome. Forms the main docking site for trigger factor binding to the ribosome. The sequence is that of Large ribosomal subunit protein uL23 from Psychromonas ingrahamii (strain DSM 17664 / CCUG 51855 / 37).